The sequence spans 332 residues: Phosphate acyltransferase (332 aa).

It belongs to the PlsX family. Homodimer. Probably interacts with PlsY.

Its subcellular location is the cytoplasm. The catalysed reaction is a fatty acyl-[ACP] + phosphate = an acyl phosphate + holo-[ACP]. The protein operates within lipid metabolism; phospholipid metabolism. In terms of biological role, catalyzes the reversible formation of acyl-phosphate (acyl-PO(4)) from acyl-[acyl-carrier-protein] (acyl-ACP). This enzyme utilizes acyl-ACP as fatty acyl donor, but not acyl-CoA. This Caldanaerobacter subterraneus subsp. tengcongensis (strain DSM 15242 / JCM 11007 / NBRC 100824 / MB4) (Thermoanaerobacter tengcongensis) protein is Phosphate acyltransferase.